The following is a 1786-amino-acid chain: MGLLQVFAFGVLALWGTRVCAQEPEFSYGCAEGSCYPATGDLLIGRAQKLSVTSTCGLHKPEPYCIVSHLQEDKKCFICDSRDPYHETLNPDSHLIENVVTTFAPNRLKIWWQSENGVENVTIQLDLEAEFHFTHLIMTFKTFRPAAMLIERSSDFGKAWGVYRYFAYDCESSFPGISTGPMKKVDDIICDSRYSDIEPSTEGEVIFRALDPAFKIEDPYSPRIQNLLKITNLRIKFVKLHTLGDNLLDSRMEIREKYYYAVYDMVVRGNCFCYGHASECAPVDGVNEEVEGMVHGHCMCRHNTKGLNCELCMDFYHDLPWRPAEGRNSNACKKCNCNEHSSSCHFDMAVFLATGNVSGGVCDNCQHNTMGRNCEQCKPFYFQHPERDIRDPNLCEPCTCDPAGSENGGICDGYTDFSVGLIAGQCRCKLHVEGERCDVCKEGFYDLSAEDPYGCKSCACNPLGTIPGGNPCDSETGYCYCKRLVTGQRCDQCLPQHWGLSNDLDGCRPCDCDLGGALNNSCSEDSGQCSCLPHMIGRQCNEVESGYYFTTLDHYIYEAEEANLGPGVIVVERQYIQDRIPSWTGPGFVRVPEGAYLEFFIDNIPYSMEYEILIRYEPQLPDHWEKAVITVQRPGKIPASSRCGNTVPDDDNQVVSLSPGSRYVVLPRPVCFEKGMNYTVRLELPQYTASGSDVESPYTFIDSLVLMPYCKSLDIFTVGGSGDGEVTNSAWETFQRYRCLENSRSVVKTPMTDVCRNIIFSISALIHQTGLACECDPQGSLSSVCDPNGGQCQCRPNVVGRTCNRCAPGTFGFGPNGCKPCDCHLQGSASAFCDAITGQCHCFQGIYARQCDRCLPGYWGFPSCQPCQCNGHALDCDTVTGECLSCQDYTTGHNCERCLAGYYGDPIIGSGDHCRPCPCPDGPDSGRQFARSCYQDPVTLQLACVCDPGYIGSRCDDCASGFFGNPSDFGGSCQPCQCHHNIDTTDPEACDKETGRCLKCLYHTEGDHCQLCQYGYYGDALRQDCRKCVCNYLGTVKEHCNGSDCHCDKATGQCSCLPNVIGQNCDRCAPNTWQLASGTGCGPCNCNAAHSFGPSCNEFTGQCQCMPGFGGRTCSECQELFWGDPDVECRACDCDPRGIETPQCDQSTGQCVCVEGVEGPRCDKCTRGYSGVFPDCTPCHQCFALWDAIIGELTNRTHKFLEKAKALKISGVIGPYRETVDSVEKKVNEIKDILAQSPAAEPLKNIGILFEEAEKLTKDVTEKMAQVEVKLTDTASQSNSTAGELGALQAEAESLDKTVKELAEQLEFIKNSDIQGALDSITKYFQMSLEAEKRVNASTTDPNSTVEQSALTRDRVEDLMLERESPFKEQQEEQARLLDELAGKLQSLDLSAVAQMTCGTPPGADCSESECGGPNCRTDEGEKKCGGPGCGGLVTVAHSAWQKAMDFDRDVLSALAEVEQLSKMVSEAKVRADEAKQNAQDVLLKTNATKEKVDKSNEDLRNLIKQIRNFLTEDSADLDSIEAVANEVLKMEMPSTPQQLQNLTEDIRERVETLSQVEVILQQSAADIARAELLLEEAKRASKSATDVKVTADMVKEALEEAEKAQVAAEKAIKQADEDIQGTQNLLTSIESETAASEETLTNASQRISKLERNVEELKRKAAQNSGEAEYIEKVVYSVKQNADDVKKTLDGELDEKYKKVESLIAQKTEESADARRKAELLQNEAKTLLAQANSKLQLLEDLERKYEDNQKYLEDKAQELVRLEGEVRSLLKDISEKVAVYSTCL.

The signal sequence occupies residues 1–21 (MGLLQVFAFGVLALWGTRVCA). The Laminin N-terminal domain occupies 31-270 (AEGSCYPATG…AVYDMVVRGN (240 aa)). Asn120 carries an N-linked (GlcNAc...) asparagine glycan. Ser250 carries the phosphoserine modification. Disulfide bonds link Cys271–Cys280, Cys273–Cys298, Cys300–Cys309, Cys312–Cys332, Cys335–Cys344, Cys337–Cys362, Cys365–Cys374, Cys377–Cys395, Cys398–Cys411, Cys400–Cys426, Cys428–Cys437, Cys440–Cys455, Cys458–Cys472, Cys460–Cys479, Cys481–Cys490, Cys493–Cys507, Cys510–Cys522, Cys512–Cys529, and Cys531–Cys540. Laminin EGF-like domains are found at residues 271 to 334 (CFCY…ACKK), 335 to 397 (CNCN…LCEP), 398 to 457 (CTCD…GCKS), and 458 to 509 (CACN…GCRP). Asn356 is a glycosylation site (N-linked (GlcNAc...) asparagine). The Laminin EGF-like 5; truncated domain occupies 510 to 540 (CDCDLGGALNNSCSEDSGQCSCLPHMIGRQC). An N-linked (GlcNAc...) asparagine glycan is attached at Asn519. Residues 549 to 767 (FTTLDHYIYE…IIFSISALIH (219 aa)) enclose the Laminin IV type B domain. N-linked (GlcNAc...) asparagine glycosylation is present at Asn677. Disulfide bonds link Cys773-Cys785, Cys775-Cys792, Cys794-Cys803, Cys806-Cys818, Cys821-Cys833, Cys823-Cys840, Cys842-Cys851, Cys854-Cys864, Cys867-Cys876, Cys869-Cys883, Cys886-Cys895, Cys898-Cys914, Cys917-Cys933, Cys919-Cys944, Cys946-Cys955, Cys958-Cys973, Cys976-Cys990, Cys978-Cys997, Cys1000-Cys1009, Cys1012-Cys1025, Cys1028-Cys1040, Cys1030-Cys1054, Cys1056-Cys1065, Cys1068-Cys1081, Cys1084-Cys1096, Cys1086-Cys1103, Cys1105-Cys1114, Cys1117-Cys1129, Cys1132-Cys1144, Cys1134-Cys1151, Cys1153-Cys1162, and Cys1165-Cys1176. 8 consecutive Laminin EGF-like domains span residues 773-820 (CECD…GCKP), 821-866 (CDCH…SCQP), 867-916 (CQCN…HCRP), 917-975 (CPCP…SCQP), 976-1027 (CQCH…DCRK), 1028-1083 (CVCN…GCGP), 1084-1131 (CNCN…ECRA), and 1132-1178 (CDCD…DCTP). Residue Asn1041 is glycosylated (N-linked (GlcNAc...) asparagine). A domain II region spans residues 1179–1397 (CHQCFALWDA…LDLSAVAQMT (219 aa)). N-linked (GlcNAc...) asparagine glycosylation is found at Asn1195, Asn1279, Asn1336, and Asn1343. Positions 1216–1315 (YRETVDSVEK…LEFIKNSDIQ (100 aa)) form a coiled coil. A coiled-coil region spans residues 1368–1388 (KEQQEEQARLLDELAGKLQSL). The interval 1398 to 1430 (CGTPPGADCSESECGGPNCRTDEGEKKCGGPGC) is domain alpha. Residues 1431–1786 (GGLVTVAHSA…EKVAVYSTCL (356 aa)) are domain I. Positions 1448–1778 (DRDVLSALAE…RSLLKDISEK (331 aa)) form a coiled coil. An N-linked (GlcNAc...) asparagine glycan is attached at Asn1487. Ser1496 bears the Phosphoserine mark. Residues Asn1542 and Asn1643 are each glycosylated (N-linked (GlcNAc...) asparagine). The residue at position 1666 (Ser1666) is a Phosphoserine.

As to quaternary structure, laminin is a complex glycoprotein, consisting of three different polypeptide chains (alpha, beta, gamma), which are bound to each other by disulfide bonds into a cross-shaped molecule comprising one long and three short arms with globules at each end. Beta-1 is a subunit of laminin-1 (laminin-111 or EHS laminin), laminin-2 (laminin-211 or merosin), laminin-6 (laminin-311 or K-laminin), laminin-8 (laminin-411), laminin-10 (laminin-511) and laminin-12 (laminin-213). Interacts with ITGB1. As to expression, widely expressed in the embryo. High levels are detected in the cerebellar basement membrane, at postnatal day 7.

Its subcellular location is the secreted. The protein resides in the extracellular space. The protein localises to the extracellular matrix. It localises to the basement membrane. In terms of biological role, binding to cells via a high affinity receptor, laminin is thought to mediate the attachment, migration and organization of cells into tissues during embryonic development by interacting with other extracellular matrix components. Involved in the organization of the laminar architecture of the cerebral cortex. It is probably required for the integrity of the basement membrane/glia limitans that serves as an anchor point for the endfeet of radial glial cells and as a physical barrier to migrating neurons. Radial glial cells play a central role in cerebral cortical development, where they act both as the proliferative unit of the cerebral cortex and a scaffold for neurons migrating toward the pial surface. The polypeptide is Laminin subunit beta-1 (Lamb1) (Mus musculus (Mouse)).